Here is a 185-residue protein sequence, read N- to C-terminus: Ribosome-recycling factor (185 aa).

The protein belongs to the RRF family.

It is found in the cytoplasm. In terms of biological role, responsible for the release of ribosomes from messenger RNA at the termination of protein biosynthesis. May increase the efficiency of translation by recycling ribosomes from one round of translation to another. This Xanthomonas oryzae pv. oryzae (strain MAFF 311018) protein is Ribosome-recycling factor.